The chain runs to 65 residues: Small ribosomal subunit protein eS27 (65 aa).

4 residues coordinate Zn(2+): Cys20, Cys23, Cys39, and Cys42. The C4-type zinc-finger motif lies at 20-42; that stretch reads CIDCGNEQIVFSHPATRVRCNVC.

The protein belongs to the eukaryotic ribosomal protein eS27 family. In terms of assembly, part of the 30S ribosomal subunit. Zn(2+) is required as a cofactor.

The sequence is that of Small ribosomal subunit protein eS27 from Pyrococcus abyssi (strain GE5 / Orsay).